Reading from the N-terminus, the 433-residue chain is Serine hydroxymethyltransferase (433 aa).

Residues leucine 132 and 136-138 (GHL) each bind (6S)-5,6,7,8-tetrahydrofolate. N6-(pyridoxal phosphate)lysine is present on lysine 241.

This sequence belongs to the SHMT family. As to quaternary structure, homodimer. The cofactor is pyridoxal 5'-phosphate.

The protein localises to the cytoplasm. The catalysed reaction is (6R)-5,10-methylene-5,6,7,8-tetrahydrofolate + glycine + H2O = (6S)-5,6,7,8-tetrahydrofolate + L-serine. Its pathway is one-carbon metabolism; tetrahydrofolate interconversion. The protein operates within amino-acid biosynthesis; glycine biosynthesis; glycine from L-serine: step 1/1. Catalyzes the reversible interconversion of serine and glycine with tetrahydrofolate (THF) serving as the one-carbon carrier. This reaction serves as the major source of one-carbon groups required for the biosynthesis of purines, thymidylate, methionine, and other important biomolecules. Also exhibits THF-independent aldolase activity toward beta-hydroxyamino acids, producing glycine and aldehydes, via a retro-aldol mechanism. This chain is Serine hydroxymethyltransferase, found in Methylobacterium sp. (strain 4-46).